The following is a 435-amino-acid chain: uncharacterized protein (435 aa).

The S-adenosyl-L-methionine site is built by Gln-261, Tyr-294, Glu-318, and Asp-366. Residue Cys-393 is the Nucleophile of the active site.

The protein belongs to the class I-like SAM-binding methyltransferase superfamily. RNA M5U methyltransferase family.

This is an uncharacterized protein from Bifidobacterium longum (strain NCC 2705).